Consider the following 625-residue polypeptide: Keratin, type II cytoskeletal 1 (625 aa).

Residues 1–12 show a composition bias toward low complexity; sequence MSFQCSSRSLCR. A disordered region spans residues 1–27; that stretch reads MSFQCSSRSLCRSGGGGGGRNFSSGSA. The head stretch occupies residues 1–178; sequence MSFQCSSRSL…DPQIQKVKSQ (178 aa). Arginine 12 carries the omega-N-methylarginine modification. Serine 23 and serine 26 each carry phosphoserine. The residue at position 51 (arginine 51) is an Omega-N-methylarginine. Residue serine 69 is modified to Phosphoserine. Positions 171–319 form a coiled coil; that stretch reads QIQKVKSQER…DIDFFSTLYQ (149 aa). Positions 179 to 214 are coil 1A; sequence EREQIKSLNDKFASFIDKVRFLEQQNQVLQTKWELL. One can recognise an IF rod domain in the interval 179–492; sequence EREQIKSLND…KLLEGEEIRM (314 aa). The interval 215–233 is linker 1; that stretch reads QQVDTSTRTQNLDPFFESY. Residues 234 to 325 are coil 1B; the sequence is ISNLRRQVDS…TLYQMELSQM (92 aa). Lysine 275 is subject to N6,N6-dimethyllysine. Positions 326 to 349 are linker 12; the sequence is QTQISETNVVLSMDNNRTLDLDGI. The tract at residues 350-488 is coil 2; it reads IAEVKAQYDS…ATYRKLLEGE (139 aa). A coiled-coil region spans residues 388–475; it reads DSVKNTKMEI…ELMNTKLALD (88 aa). A tail region spans residues 489 to 625; that stretch reads EIRMSGECTP…VSTTYSRGTN (137 aa). 2 disordered regions span residues 496–525 and 560–625; these read CTPN…YGSG and SGGG…RGTN. Residues 500–515 are compositionally biased toward low complexity; sequence VSVSVSTSHTSMSGTS. Composition is skewed to gly residues over residues 516 to 525 and 560 to 606; these read SRGGGRYGSG and SGGG…GGVK. Omega-N-methylarginine occurs at positions 517, 574, and 596. Polar residues predominate over residues 613–625; the sequence is VKFVSTTYSRGTN.

The protein belongs to the intermediate filament family. Heterotetramer of two type I and two type II keratins. Heterodimer with KRT10. Two heterodimers of KRT1 and KRT10 form a heterotetramer. Forms a heterodimer with KRT14; the interaction is more abundant in the absence of KRT5. Interacts with ITGB1 in the presence of RACK1 and SRC, and with RACK1. Interacts with C1QBP; the association represents a cell surface kininogen receptor. Interacts with EPPK1; interaction is dependent of higher-order structure of intermediate filament. Post-translationally, undergoes deimination of some arginine residues (citrullination).

Its subcellular location is the cell membrane. The protein localises to the cytoplasm. May regulate the activity of kinases such as PKC and SRC via binding to integrin beta-1 (ITB1) and the receptor of activated protein C kinase 1 (RACK1). In complex with C1QBP is a high affinity receptor for kininogen-1/HMWK. The polypeptide is Keratin, type II cytoskeletal 1 (Rattus norvegicus (Rat)).